A 238-amino-acid polypeptide reads, in one-letter code: MNEPKYKRVMLKLSGEALSGEKGFGFDFDFTKEISEQIKKLVDMGIEVGAVVGGGNIWRGRSGSEMDRTTADYMGMLATCINALALQDSLEQLGVNTRVQTAIEMKEIAEPFIRRRAMRHLEKERVVIFASGTGNPYFSTDTAAALRAAEIEADVILLAKKVDGVYDKDPHKYDDAKKYNKLSYIEVLEQGLQVMDSTATSLCMDNDIPILVFGLDEPCNIIKAVTGEEIGTLVSNSK.

ATP is bound at residue 12–15; the sequence is KLSG. Residues 20-25 are involved in allosteric activation by GTP; it reads GEKGFG. Gly-54 is a UMP binding site. Residues Gly-55 and Arg-59 each coordinate ATP. Residues Asp-72 and 133–140 contribute to the UMP site; that span reads TGNPYFST. ATP-binding residues include Tyr-166 and Asp-169.

The protein belongs to the UMP kinase family. Homohexamer.

It is found in the cytoplasm. It carries out the reaction UMP + ATP = UDP + ADP. Its pathway is pyrimidine metabolism; CTP biosynthesis via de novo pathway; UDP from UMP (UMPK route): step 1/1. Its activity is regulated as follows. Allosterically activated by GTP. Inhibited by UTP. Its function is as follows. Catalyzes the reversible phosphorylation of UMP to UDP. This chain is Uridylate kinase, found in Clostridium botulinum (strain Hall / ATCC 3502 / NCTC 13319 / Type A).